A 122-amino-acid chain; its full sequence is Large ribosomal subunit protein uL14 (122 aa).

The protein belongs to the universal ribosomal protein uL14 family. As to quaternary structure, part of the 50S ribosomal subunit. Forms a cluster with proteins L3 and L19. In the 70S ribosome, L14 and L19 interact and together make contacts with the 16S rRNA in bridges B5 and B8.

In terms of biological role, binds to 23S rRNA. Forms part of two intersubunit bridges in the 70S ribosome. The sequence is that of Large ribosomal subunit protein uL14 from Natranaerobius thermophilus (strain ATCC BAA-1301 / DSM 18059 / JW/NM-WN-LF).